A 446-amino-acid polypeptide reads, in one-letter code: C4-dicarboxylate transport protein (446 aa).

Helical transmembrane passes span 25–45, 58–78, 93–113, 159–179, 199–219, 236–256, 322–342, 370–390, and 400–420; these read VQVLAAIVAGVLLGHFWPAIG, LVKMIIAPVIFLTVATGIASI, FAYFLFFSTLALIVGLVVANV, ALTEGSILQALFVAILFGLAL, VFFGLVGMLMKFAPIGAFGAM, LLIATFYLTSLFFVIVILGAV, IYMTLAALFIAQAVGVDLSLG, AATLSIVPSVPVAGLALILGI, and LTNFIGNALAAIVVAGWEKGL.

Belongs to the dicarboxylate/amino acid:cation symporter (DAACS) (TC 2.A.23) family.

The protein localises to the cell inner membrane. Responsible for the transport of dicarboxylates such as succinate, fumarate, and malate from the periplasm across the membrane. The sequence is that of C4-dicarboxylate transport protein from Sphingopyxis alaskensis (strain DSM 13593 / LMG 18877 / RB2256) (Sphingomonas alaskensis).